Consider the following 425-residue polypeptide: Kynurenine/alpha-aminoadipate aminotransferase, mitochondrial (425 aa).

A mitochondrion-targeting transit peptide spans 1 to 29 (MNYSRFLTATSLARKTSPIRATVEIMSRA). Arg-20 provides a ligand contact to substrate. At Ser-40 the chain carries Phosphoserine. Substrate is bound by residues Tyr-74 and Tyr-142. Lys-172 bears the N6-succinyllysine mark. Lys-179 bears the N6-acetyllysine mark. The segment covering 179 to 188 (KPEDSKDPTK) has biased composition (basic and acidic residues). The segment at 179–208 (KPEDSKDPTKRTPKFLYTIPNGNNPTGNSL) is disordered. Residues 198-208 (PNGNNPTGNSL) show a composition bias toward polar residues. Asn-202 provides a ligand contact to substrate. Position 263 is an N6-(pyridoxal phosphate)lysine; alternate (Lys-263). Lys-263 and Lys-339 each carry N6-acetyllysine; alternate. An N6-succinyllysine; alternate mark is found at Lys-263 and Lys-339. Lys-351 is modified (N6-acetyllysine). The residue at position 367 (Lys-367) is an N6-acetyllysine; alternate. Lys-367 carries the N6-succinyllysine; alternate modification. Arg-399 lines the substrate pocket. Lys-422 bears the N6-acetyllysine mark.

It belongs to the class-I pyridoxal-phosphate-dependent aminotransferase family. Homodimer. Pyridoxal 5'-phosphate is required as a cofactor. Post-translationally, the N-terminus is blocked.

The protein resides in the mitochondrion. It catalyses the reaction L-kynurenine + 2-oxoglutarate = kynurenate + L-glutamate + H2O. The catalysed reaction is L-2-aminoadipate + 2-oxoglutarate = 2-oxoadipate + L-glutamate. It carries out the reaction glycine + 2-oxoglutarate = glyoxylate + L-glutamate. The enzyme catalyses L-kynurenine + glyoxylate = kynurenate + glycine + H2O. It catalyses the reaction 3-hydroxy-L-kynurenine + glyoxylate = xanthurenate + glycine + H2O. The catalysed reaction is 2-oxohexanoate + L-kynurenine = L-2-aminohexanoate + kynurenate + H2O. It carries out the reaction 3-phenylpyruvate + L-kynurenine = kynurenate + L-phenylalanine + H2O. The enzyme catalyses 4-methylsulfanyl-2-oxobutanoate + L-kynurenine = kynurenate + L-methionine + H2O. It catalyses the reaction 2-oxo-3-sulfanylpropanoate + L-kynurenine = kynurenate + L-cysteine + H2O. The catalysed reaction is indole-3-pyruvate + L-kynurenine = kynurenate + L-tryptophan + H2O. It carries out the reaction 2-oxopentanoate + L-kynurenine = L-2-aminopentanoate + kynurenate + H2O. The enzyme catalyses 4-methyl-2-oxopentanoate + L-kynurenine = kynurenate + L-leucine + H2O. It catalyses the reaction glyoxylate + L-methionine = 4-methylsulfanyl-2-oxobutanoate + glycine. The catalysed reaction is L-2-aminoadipate + glyoxylate = 2-oxoadipate + glycine. It carries out the reaction L-tyrosine + glyoxylate = 3-(4-hydroxyphenyl)pyruvate + glycine. The enzyme catalyses glyoxylate + L-phenylalanine = 3-phenylpyruvate + glycine. It catalyses the reaction L-tryptophan + glyoxylate = indole-3-pyruvate + glycine. The catalysed reaction is L-leucine + glyoxylate = 4-methyl-2-oxopentanoate + glycine. It carries out the reaction 2-oxobutanoate + L-kynurenine = (2S)-2-aminobutanoate + kynurenate + H2O. The enzyme catalyses 2-oxoadipate + L-kynurenine = L-2-aminoadipate + kynurenate + H2O. It catalyses the reaction 2-oxoadipate + L-kynurenine = 4-(2-aminophenyl)-2,4-dioxobutanoate + L-2-aminoadipate. The protein operates within amino-acid degradation; L-lysine degradation via saccharopine pathway; glutaryl-CoA from L-lysine: step 4/6. Its function is as follows. Transaminase with broad substrate specificity. Has transaminase activity towards aminoadipate, kynurenine, methionine and glutamate. Shows activity also towards tryptophan, aspartate and hydroxykynurenine. Accepts a variety of oxo-acids as amino-group acceptors, with a preference for 2-oxoglutarate, 2-oxocaproic acid, phenylpyruvate and alpha-oxo-gamma-methiol butyric acid. Can also use glyoxylate as amino-group acceptor (in vitro). The protein is Kynurenine/alpha-aminoadipate aminotransferase, mitochondrial of Rattus norvegicus (Rat).